Here is a 58-residue protein sequence, read N- to C-terminus: uncharacterized protein (58 aa).

A helical membrane pass occupies residues 5-27 (FLHANITIIPHSVLYVSLSYYII).

The protein resides in the membrane. This is an uncharacterized protein from Saccharomyces cerevisiae (strain ATCC 204508 / S288c) (Baker's yeast).